A 179-amino-acid polypeptide reads, in one-letter code: MSKDLEVAGRYANALFQVAQDKDLVDVFSEELTELKAALKANEDFVKLLENPTFTTEQKKNLASAVFEKINPTLRDFIYLLIDRSREDYLSVIADVYQKRVNDLNGVADADVYSVVPLSEQELTALSRVFATKMNKTKLNIQNHIDKSLLGGVKVVIGTRIYDDSLKTKLKDMERQIKA.

This sequence belongs to the ATPase delta chain family. In terms of assembly, F-type ATPases have 2 components, F(1) - the catalytic core - and F(0) - the membrane proton channel. F(1) has five subunits: alpha(3), beta(3), gamma(1), delta(1), epsilon(1). F(0) has three main subunits: a(1), b(2) and c(10-14). The alpha and beta chains form an alternating ring which encloses part of the gamma chain. F(1) is attached to F(0) by a central stalk formed by the gamma and epsilon chains, while a peripheral stalk is formed by the delta and b chains.

Its subcellular location is the cell membrane. Functionally, f(1)F(0) ATP synthase produces ATP from ADP in the presence of a proton or sodium gradient. F-type ATPases consist of two structural domains, F(1) containing the extramembraneous catalytic core and F(0) containing the membrane proton channel, linked together by a central stalk and a peripheral stalk. During catalysis, ATP synthesis in the catalytic domain of F(1) is coupled via a rotary mechanism of the central stalk subunits to proton translocation. In terms of biological role, this protein is part of the stalk that links CF(0) to CF(1). It either transmits conformational changes from CF(0) to CF(1) or is implicated in proton conduction. The protein is ATP synthase subunit delta of Listeria monocytogenes serotype 4b (strain CLIP80459).